The primary structure comprises 397 residues: LIM/homeobox protein Lhx9 (397 aa).

2 consecutive LIM zinc-binding domains span residues 69–130 (ALCA…RFSV) and 131–193 (QRCA…LLQG). Disordered stretches follow at residues 248–272 (ENEA…RMRT), 330–364 (ENGG…TLTD), and 378–397 (SNMD…TNLF). The segment at residues 267–326 (TKRMRTSFKHHQLRTMKSYFAINHNPDAKDLKQLAQKTGLTKRVLQVWFQNARAKFRRNL) is a DNA-binding region (homeobox). The span at 353–364 (LTPPGTATTLTD) shows a compositional bias: low complexity.

As to quaternary structure, interacts with LDB1 and LDB2.

It localises to the nucleus. Functionally, involved in gonadal development. The protein is LIM/homeobox protein Lhx9 (LHX9) of Homo sapiens (Human).